A 456-amino-acid polypeptide reads, in one-letter code: ATP synthase subunit beta 1 (456 aa).

Residue 152–159 (GGAGVGKS) coordinates ATP.

The protein belongs to the ATPase alpha/beta chains family. In terms of assembly, F-type ATPases have 2 components, CF(1) - the catalytic core - and CF(0) - the membrane proton channel. CF(1) has five subunits: alpha(3), beta(3), gamma(1), delta(1), epsilon(1). CF(0) has three main subunits: a(1), b(2) and c(9-12). The alpha and beta chains form an alternating ring which encloses part of the gamma chain. CF(1) is attached to CF(0) by a central stalk formed by the gamma and epsilon chains, while a peripheral stalk is formed by the delta and b chains.

The protein resides in the cell membrane. It catalyses the reaction ATP + H2O + 4 H(+)(in) = ADP + phosphate + 5 H(+)(out). Its function is as follows. Produces ATP from ADP in the presence of a proton gradient across the membrane. The catalytic sites are hosted primarily by the beta subunits. The protein is ATP synthase subunit beta 1 of Listeria monocytogenes serovar 1/2a (strain ATCC BAA-679 / EGD-e).